Here is a 276-residue protein sequence, read N- to C-terminus: Membrane protein insertase YidC 2 (276 aa).

The N-terminal stretch at 1 to 22 is a signal peptide; the sequence is MGVKKKLKLTSLLGLSLLIMTA. A lipid anchor (N-palmitoyl cysteine) is attached at Cys23. The S-diacylglycerol cysteine moiety is linked to residue Cys23. The next 4 helical transmembrane spans lie at 58–78, 130–150, 169–189, and 207–227; these read ISIG…LLPV, SDSL…FQAL, VDTT…STWL, and GIPV…ALYW.

This sequence belongs to the OXA1/ALB3/YidC family. Type 2 subfamily. In terms of assembly, interacts with KhpB (also called EloR/Jag).

It is found in the cell membrane. Required for the insertion and/or proper folding and/or complex formation of integral membrane proteins into the membrane. Involved in integration of membrane proteins that insert both dependently and independently of the Sec translocase complex, as well as at least some lipoproteins. This is Membrane protein insertase YidC 2 from Streptococcus pneumoniae (strain ATCC BAA-255 / R6).